A 64-amino-acid polypeptide reads, in one-letter code: Disintegrin VB7A (64 aa).

A Disintegrin domain is found at 1 to 64 (NSGNPCCDPV…SDCPRNPYKD (64 aa)). Intrachain disulfides connect cysteine 6–cysteine 29, cysteine 20–cysteine 26, cysteine 25–cysteine 50, and cysteine 38–cysteine 57. The short motif at 42–44 (RGD) is the Cell attachment site element.

It belongs to the disintegrin family. Dimeric disintegrin subfamily. As to quaternary structure, heterodimer with VB7B; disulfide-linked. As to expression, expressed by the venom gland.

Its subcellular location is the secreted. Its function is as follows. Poor inhibitor of platelet aggregation. The disintegrin inhibits the adhesion of cells expressing the RGD-dependent integrin alpha-5/beta-1 (ITGA5/ITGB1) to immobilized fibronectin. Inhibition on alpha-2b/beta-3 (ITGA2B/ITGB3) is low. This chain is Disintegrin VB7A, found in Vipera berus berus (Common viper).